Consider the following 101-residue polypeptide: Chaperone modulatory protein CbpM (101 aa).

This sequence belongs to the CbpM family.

In terms of biological role, interacts with CbpA and inhibits both the DnaJ-like co-chaperone activity and the DNA binding activity of CbpA. Together with CbpA, modulates the activity of the DnaK chaperone system. Does not inhibit the co-chaperone activity of DnaJ. This Escherichia coli (strain K12 / MC4100 / BW2952) protein is Chaperone modulatory protein CbpM.